The chain runs to 346 residues: NADH-quinone oxidoreductase subunit H (346 aa).

9 consecutive transmembrane segments (helical) span residues 13-33 (ILLILLQCLLLVVPLLVALAF), 51-71 (PNVVGAFGLLQSFADFLKYIV), 83-103 (AVYFLAPIVSLVMALIAWAVI), 116-136 (VAVLYVFAVSSLEVYGVIMGG), 162-182 (IGLIIIGVIISTGSMNFTAIV), 191-211 (LLNWYFLPHFPMLFLFFISAL), 244-264 (FMIGELVAVVLMCALTVLLFF), 278-298 (VFWMILKMLAVFFMFSMVKAI), and 310-330 (LGWKVFLPFSLFWVVFVAFMA).

The protein belongs to the complex I subunit 1 family. NDH-1 is composed of 14 different subunits. Subunits NuoA, H, J, K, L, M, N constitute the membrane sector of the complex.

It localises to the cell inner membrane. It carries out the reaction a quinone + NADH + 5 H(+)(in) = a quinol + NAD(+) + 4 H(+)(out). Its function is as follows. NDH-1 shuttles electrons from NADH, via FMN and iron-sulfur (Fe-S) centers, to quinones in the respiratory chain. The immediate electron acceptor for the enzyme in this species is believed to be ubiquinone. Couples the redox reaction to proton translocation (for every two electrons transferred, four hydrogen ions are translocated across the cytoplasmic membrane), and thus conserves the redox energy in a proton gradient. This subunit may bind ubiquinone. This chain is NADH-quinone oxidoreductase subunit H, found in Jannaschia sp. (strain CCS1).